Here is a 172-residue protein sequence, read N- to C-terminus: 3-hydroxydecanoyl-[acyl-carrier-protein] dehydratase (172 aa).

Histidine 71 is a catalytic residue.

It belongs to the thioester dehydratase family. FabA subfamily. Homodimer.

It localises to the cytoplasm. It carries out the reaction a (3R)-hydroxyacyl-[ACP] = a (2E)-enoyl-[ACP] + H2O. The enzyme catalyses (3R)-hydroxydecanoyl-[ACP] = (2E)-decenoyl-[ACP] + H2O. The catalysed reaction is (2E)-decenoyl-[ACP] = (3Z)-decenoyl-[ACP]. It participates in lipid metabolism; fatty acid biosynthesis. In terms of biological role, necessary for the introduction of cis unsaturation into fatty acids. Catalyzes the dehydration of (3R)-3-hydroxydecanoyl-ACP to E-(2)-decenoyl-ACP and then its isomerization to Z-(3)-decenoyl-ACP. Can catalyze the dehydratase reaction for beta-hydroxyacyl-ACPs with saturated chain lengths up to 16:0, being most active on intermediate chain length. The polypeptide is 3-hydroxydecanoyl-[acyl-carrier-protein] dehydratase (Cronobacter sakazakii (strain ATCC BAA-894) (Enterobacter sakazakii)).